Here is a 361-residue protein sequence, read N- to C-terminus: S-adenosylmethionine:tRNA ribosyltransferase-isomerase (361 aa).

It belongs to the QueA family. Monomer.

The protein localises to the cytoplasm. It catalyses the reaction 7-aminomethyl-7-carbaguanosine(34) in tRNA + S-adenosyl-L-methionine = epoxyqueuosine(34) in tRNA + adenine + L-methionine + 2 H(+). The protein operates within tRNA modification; tRNA-queuosine biosynthesis. Its function is as follows. Transfers and isomerizes the ribose moiety from AdoMet to the 7-aminomethyl group of 7-deazaguanine (preQ1-tRNA) to give epoxyqueuosine (oQ-tRNA). This chain is S-adenosylmethionine:tRNA ribosyltransferase-isomerase, found in Rhizobium etli (strain ATCC 51251 / DSM 11541 / JCM 21823 / NBRC 15573 / CFN 42).